The primary structure comprises 205 residues: Probable peptidyl-tRNA hydrolase 2 (205 aa).

Polar residues predominate over residues 40-49 (YSSKNANKAS). The segment at 40 to 68 (YSSKNANKASNPEKESPVSVSNDEDSESE) is disordered. Phosphoserine occurs at positions 65 and 79.

Belongs to the PTH2 family.

The catalysed reaction is an N-acyl-L-alpha-aminoacyl-tRNA + H2O = an N-acyl-L-amino acid + a tRNA + H(+). Its function is as follows. The natural substrate for this enzyme may be peptidyl-tRNAs which drop off the ribosome during protein synthesis. The chain is Probable peptidyl-tRNA hydrolase 2 from Schizosaccharomyces pombe (strain 972 / ATCC 24843) (Fission yeast).